Consider the following 306-residue polypeptide: 4-diphosphocytidyl-2-C-methyl-D-erythritol kinase (306 aa).

The active site involves Lys-23. An ATP-binding site is contributed by 108–118; sequence PIAAGIGGGSA. Residue Asp-150 is part of the active site.

It belongs to the GHMP kinase family. IspE subfamily.

The catalysed reaction is 4-CDP-2-C-methyl-D-erythritol + ATP = 4-CDP-2-C-methyl-D-erythritol 2-phosphate + ADP + H(+). The protein operates within isoprenoid biosynthesis; isopentenyl diphosphate biosynthesis via DXP pathway; isopentenyl diphosphate from 1-deoxy-D-xylulose 5-phosphate: step 3/6. Its function is as follows. Catalyzes the phosphorylation of the position 2 hydroxy group of 4-diphosphocytidyl-2C-methyl-D-erythritol. In Rhodopseudomonas palustris (strain BisB18), this protein is 4-diphosphocytidyl-2-C-methyl-D-erythritol kinase.